The sequence spans 260 residues: MAFVPPQAGYDRAITVFSPDGRLFQVNYAREAVKRGATAVGVKWKDGVVLAVEKRITSKLIEPSSYEKIFLIDDHIAAAPSGIIADARVLVDRARLEAQIYRLTYGEPVPLTVLVKKICDLKQAHTQYGGVRPFGAALLMAGVNEKPELFETDPSGAYFEWKAVAIGSGRNTAMAIFEEHYRDDIGKDDAIKLAILALAKTLEEPTAEGIEVAYITMDEKRWKKLPREELEKYINEILQEVKEEEVEEKQEDYSELDQNY.

This sequence belongs to the peptidase T1A family. The 20S proteasome core is composed of 14 alpha and 14 beta subunits that assemble into four stacked heptameric rings, resulting in a barrel-shaped structure. The two inner rings, each composed of seven catalytic beta subunits, are sandwiched by two outer rings, each composed of seven alpha subunits. The catalytic chamber with the active sites is on the inside of the barrel. Has a gated structure, the ends of the cylinder being occluded by the N-termini of the alpha-subunits. Is capped at one or both ends by the proteasome regulatory ATPase, PAN.

It is found in the cytoplasm. With respect to regulation, the formation of the proteasomal ATPase PAN-20S proteasome complex, via the docking of the C-termini of PAN into the intersubunit pockets in the alpha-rings, triggers opening of the gate for substrate entry. Interconversion between the open-gate and close-gate conformations leads to a dynamic regulation of the 20S proteasome proteolysis activity. In terms of biological role, component of the proteasome core, a large protease complex with broad specificity involved in protein degradation. The sequence is that of Proteasome subunit alpha from Thermococcus kodakarensis (strain ATCC BAA-918 / JCM 12380 / KOD1) (Pyrococcus kodakaraensis (strain KOD1)).